A 290-amino-acid polypeptide reads, in one-letter code: Poly-beta-1,6-N-acetyl-D-glucosamine N-deacetylase (290 aa).

Positions 1 to 28 (MKYRKLIILVLSILIILPVSTLDGHHIA) are cleaved as a signal peptide. The NodB homology domain maps to 114–290 (RSVWINFDDM…KRWDGFHEKD (177 aa)).

It belongs to the polysaccharide deacetylase family.

The protein resides in the secreted. It localises to the cell wall. In terms of biological role, catalyzes the N-deacetylation of poly-beta-1,6-N-acetyl-D-glucosamine (PNAG, also referred to as PIA), a biofilm adhesin polysaccharide. N-deacetylation is crucial for attachment of the polysaccharide to the bacterial cell surface; it leads to the introduction of positive charges in the otherwise neutral PIA polymer, allowing electrostatic interactions. This is Poly-beta-1,6-N-acetyl-D-glucosamine N-deacetylase (icaB) from Staphylococcus aureus (strain MRSA252).